Here is an 89-residue protein sequence, read N- to C-terminus: Protein XhlA (89 aa).

The chain crosses the membrane as a helical span at residues 63-83 (ITGAIITAVSTGIIGGAIAIM).

It to B.licheniformis xpaF1 and xpaL1.

It is found in the cell membrane. Functionally, associated with cell lysis upon induction of PbsX. This Bacillus subtilis (strain 168) protein is Protein XhlA (xhlA).